The primary structure comprises 436 residues: 3-ketoacyl-CoA thiolase (436 aa).

The active-site Acyl-thioester intermediate is the C99. Active-site proton acceptor residues include H392 and C422.

Belongs to the thiolase-like superfamily. Thiolase family. As to quaternary structure, heterotetramer of two alpha chains (FadJ) and two beta chains (FadI).

The protein resides in the cytoplasm. The enzyme catalyses an acyl-CoA + acetyl-CoA = a 3-oxoacyl-CoA + CoA. It participates in lipid metabolism; fatty acid beta-oxidation. Functionally, catalyzes the final step of fatty acid oxidation in which acetyl-CoA is released and the CoA ester of a fatty acid two carbons shorter is formed. This chain is 3-ketoacyl-CoA thiolase, found in Escherichia coli O9:H4 (strain HS).